Here is a 119-residue protein sequence, read N- to C-terminus: Small ribosomal subunit protein uS13 (119 aa).

Residues 93 to 119 (RRGLPLRGQRTRSNARTRKGKRKPIRS) are disordered.

The protein belongs to the universal ribosomal protein uS13 family. Part of the 30S ribosomal subunit. Forms a loose heterodimer with protein S19. Forms two bridges to the 50S subunit in the 70S ribosome.

Functionally, located at the top of the head of the 30S subunit, it contacts several helices of the 16S rRNA. In the 70S ribosome it contacts the 23S rRNA (bridge B1a) and protein L5 of the 50S subunit (bridge B1b), connecting the 2 subunits; these bridges are implicated in subunit movement. Contacts the tRNAs in the A and P-sites. The polypeptide is Small ribosomal subunit protein uS13 (Coxiella burnetii (strain RSA 493 / Nine Mile phase I)).